The sequence spans 197 residues: Small ribosomal subunit protein uS11m (197 aa).

Over residues 43–52 (AAKEEVEKAE) the composition is skewed to basic and acidic residues. The segment at 43 to 66 (AAKEEVEKAETPAPAPSRSSFSIY) is disordered.

It belongs to the universal ribosomal protein uS11 family. As to quaternary structure, component of the mitochondrial ribosome small subunit (28S) which comprises a 12S rRNA and about 30 distinct proteins.

The protein localises to the mitochondrion. This Bos taurus (Bovine) protein is Small ribosomal subunit protein uS11m (MRPS11).